The following is a 460-amino-acid chain: UDP-N-acetylmuramoylalanine--D-glutamate ligase (460 aa).

ATP is bound at residue 120–126; the sequence is GSNGKTT.

It belongs to the MurCDEF family.

Its subcellular location is the cytoplasm. It catalyses the reaction UDP-N-acetyl-alpha-D-muramoyl-L-alanine + D-glutamate + ATP = UDP-N-acetyl-alpha-D-muramoyl-L-alanyl-D-glutamate + ADP + phosphate + H(+). It functions in the pathway cell wall biogenesis; peptidoglycan biosynthesis. Its function is as follows. Cell wall formation. Catalyzes the addition of glutamate to the nucleotide precursor UDP-N-acetylmuramoyl-L-alanine (UMA). In Lactobacillus johnsonii (strain CNCM I-12250 / La1 / NCC 533), this protein is UDP-N-acetylmuramoylalanine--D-glutamate ligase.